The following is a 224-amino-acid chain: Response regulator protein GraR (224 aa).

Residues 2–115 (QILLVEDDNT…VLIAKLQAIY (114 aa)) form the Response regulatory domain. Residue aspartate 51 is modified to 4-aspartylphosphate. The ompR/PhoB-type DNA-binding region spans 126-224 (KRTLSWQDAT…KVGKGYLAHE (99 aa)).

Phosphorylated by GraS.

It is found in the cytoplasm. Member of the two-component regulatory system GraR/GraS involved in resistance against cationic antimicrobial peptides (CAMPs). The polypeptide is Response regulator protein GraR (graR) (Staphylococcus epidermidis (strain ATCC 35984 / DSM 28319 / BCRC 17069 / CCUG 31568 / BM 3577 / RP62A)).